The following is a 417-amino-acid chain: Exodeoxyribonuclease 7 large subunit (417 aa).

The protein belongs to the XseA family. Heterooligomer composed of large and small subunits.

Its subcellular location is the cytoplasm. It carries out the reaction Exonucleolytic cleavage in either 5'- to 3'- or 3'- to 5'-direction to yield nucleoside 5'-phosphates.. In terms of biological role, bidirectionally degrades single-stranded DNA into large acid-insoluble oligonucleotides, which are then degraded further into small acid-soluble oligonucleotides. This is Exodeoxyribonuclease 7 large subunit from Lactococcus lactis subsp. lactis (strain IL1403) (Streptococcus lactis).